Reading from the N-terminus, the 1381-residue chain is Hepatocyte growth factor receptor (1381 aa).

An N-terminal signal peptide occupies residues 1-24 (MKAPAVLAPGILVLLFTLVQRSNG). Topologically, residues 25-934 (ECKEALTKSE…VQPDQNFTGL (910 aa)) are extracellular. A Sema domain is found at 27–515 (KEALTKSEMN…TGKKITKIPL (489 aa)). Residue Asn45 is glycosylated (N-linked (GlcNAc...) asparagine). Cystine bridges form between Cys95–Cys101, Cys98–Cys160, Cys133–Cys141, and Cys172–Cys175. Asn106 carries an N-linked (GlcNAc...) asparagine glycan. Residue Asn149 is glycosylated (N-linked (GlcNAc...) asparagine). A glycan (N-linked (GlcNAc...) asparagine) is linked at Asn202. Intrachain disulfides connect Cys298–Cys363 and Cys385–Cys397. N-linked (GlcNAc...) asparagine glycosylation occurs at Asn399. Intrachain disulfides connect Cys520–Cys538, Cys526–Cys561, Cys529–Cys545, and Cys541–Cys551. IPT/TIG domains follow at residues 563 to 655 (PTIY…FSYV), 657 to 739 (PIIT…FSYR), and 742 to 836 (PIVY…LIYV). O-linked (Man) threonine glycosylation occurs at Thr582. Residues Asn607 and Asn635 are each glycosylated (N-linked (GlcNAc...) asparagine). 2 O-linked (Man) threonine glycosylation sites follow: Thr676 and Thr761. Residues Asn785, Asn879, and Asn930 are each glycosylated (N-linked (GlcNAc...) asparagine). Residues 935 to 955 (VAGVVSISIALLLLLGLFLWL) traverse the membrane as a helical segment. The Cytoplasmic portion of the chain corresponds to 956–1381 (KKKKQIKDLG…QDNTDGEVDT (426 aa)). Ser966 is modified (phosphoserine). Residue Thr977 is modified to Phosphothreonine. Residues Ser990, Ser997, and Ser1000 each carry the phosphoserine modification. At Tyr1003 the chain carries Phosphotyrosine. Residues 1078 to 1345 (VHFNEVIGRG…RISAIFSTFI (268 aa)) form the Protein kinase domain. ATP is bound by residues 1084-1092 (IGRGHFGCV) and Lys1110. Residue Asp1204 is the Proton acceptor of the active site. The interval 1212 to 1381 (LDEKFTVKVA…QDNTDGEVDT (170 aa)) is interaction with RANBP9. Tyr1230 bears the Phosphotyrosine mark. Phosphotyrosine; by autocatalysis occurs at positions 1234 and 1235. Phosphothreonine is present on Thr1289. The tract at residues 1320 to 1359 (WHPKAEMRPSFSELVSRISAIFSTFIGEHYVHVNATYVNV) is interaction with MUC20. Residues Tyr1349 and Tyr1356 each carry the phosphotyrosine; by autocatalysis modification. Residue Tyr1365 is modified to Phosphotyrosine.

This sequence belongs to the protein kinase superfamily. Tyr protein kinase family. Heterodimer made of an alpha chain (50 kDa) and a beta chain (145 kDa) which are disulfide linked. Binds PLXNB1. Interacts when phosphorylated with downstream effectors including STAT3, PIK3R1, SRC, PCLG1, GRB2 and GAB1. Interacts with SPSB1, SPSB2 and SPSB4. Interacts with INPP5D/SHIP1. When phosphorylated at Tyr-1356, interacts with INPPL1/SHIP2. Interacts with RANBP9 and RANBP10, as well as SPSB1, SPSB2, SPSB3 and SPSB4. SPSB1 binding occurs in the presence and in the absence of HGF, however HGF treatment has a positive effect on this interaction. Interacts with MUC20; prevents interaction with GRB2 and suppresses hepatocyte growth factor-induced cell proliferation. Interacts with GRB10. Interacts with PTPN1 and PTPN2. Interacts with HSP90AA1 and HSP90AB1; the interaction suppresses MET kinase activity. Interacts with tensin TNS3. Interacts (when phosphorylated) with tensin TNS4 (via SH2 domain); the interaction increases MET protein stability by inhibiting MET endocytosis and subsequent lysosomal degradation. In terms of processing, autophosphorylated in response to ligand binding on Tyr-1234 and Tyr-1235 in the kinase domain leading to further phosphorylation of Tyr-1349 and Tyr-1356 in the C-terminal multifunctional docking site. Dephosphorylated by PTPRJ at Tyr-1349 and Tyr-1365. Dephosphorylated by PTPN1 and PTPN2. Ubiquitinated. Ubiquitination by CBL regulates the receptor stability and activity through proteasomal degradation. Post-translationally, O-mannosylation of IPT/TIG domains by TMEM260 is required for protein maturation. O-mannosylated residues are composed of single mannose glycans that are not elongated or modified.

It is found in the membrane. The catalysed reaction is L-tyrosyl-[protein] + ATP = O-phospho-L-tyrosyl-[protein] + ADP + H(+). In terms of biological role, receptor tyrosine kinase that transduces signals from the extracellular matrix into the cytoplasm by binding to hepatocyte growth factor/HGF ligand. Regulates many physiological processes including proliferation, scattering, morphogenesis and survival. Ligand binding at the cell surface induces autophosphorylation of MET on its intracellular domain that provides docking sites for downstream signaling molecules. Following activation by ligand, interacts with the PI3-kinase subunit PIK3R1, PLCG1, SRC, GRB2, STAT3 or the adapter GAB1. Recruitment of these downstream effectors by MET leads to the activation of several signaling cascades including the RAS-ERK, PI3 kinase-AKT, or PLCgamma-PKC. The RAS-ERK activation is associated with the morphogenetic effects while PI3K/AKT coordinates prosurvival effects. During embryonic development, MET signaling plays a role in gastrulation, development and migration of muscles and neuronal precursors, angiogenesis and kidney formation. In adults, participates in wound healing as well as organ regeneration and tissue remodeling. Also promotes differentiation and proliferation of hematopoietic cells. This is Hepatocyte growth factor receptor (MET) from Callithrix jacchus (White-tufted-ear marmoset).